The primary structure comprises 147 residues: Small ribosomal subunit protein uS9 (147 aa).

Belongs to the universal ribosomal protein uS9 family.

In Dictyostelium discoideum (Social amoeba), this protein is Small ribosomal subunit protein uS9 (rps16).